The primary structure comprises 104 residues: AVIToxin-VAR1 (104 aa).

The N-terminal stretch at 1-19 is a signal peptide; it reads MRSLLCAPLLLLLLSAGES. 5 cysteine pairs are disulfide-bonded: Cys26-Cys38, Cys32-Cys50, Cys37-Cys78, Cys60-Cys86, and Cys80-Cys96.

This sequence belongs to the AVIT (prokineticin) family. As to expression, expressed by the venom gland.

It localises to the secreted. Its function is as follows. Potent agonist for both PKR1/PROKR1 and PKR2/PROKR2. Potently contracts gastrointestinal (GI) smooth muscle. In Varanus varius (Lace monitor lizard), this protein is AVIToxin-VAR1.